The chain runs to 325 residues: Melanocortin receptor 5 (325 aa).

Residues 1-37 lie on the Extracellular side of the membrane; it reads MNSSFHLHFLDLNLNATEGNLSGPNVKNKSSPCEDMG. N-linked (GlcNAc...) asparagine glycans are attached at residues asparagine 2, asparagine 15, asparagine 20, and asparagine 28. The helical transmembrane segment at 38 to 61 threads the bilayer; sequence IAVEVFLTLGVISLLENILVIGAI. Residues 62–73 lie on the Cytoplasmic side of the membrane; the sequence is VKNKNLHSPMYF. Residues 74–97 form a helical membrane-spanning segment; that stretch reads FVCSLAVADMLVSMSSAWETITIY. Topologically, residues 98–114 are extracellular; that stretch reads LLNNKHLVIADAFVRHI. The chain crosses the membrane as a helical span at residues 115 to 138; sequence DNVFDSMICISVVASMCSLLAIAV. At 139 to 155 the chain is on the cytoplasmic side; that stretch reads DRYVTIFYALRYHHIMT. A helical transmembrane segment spans residues 156-179; sequence ARRSGAIIAGIWAFCTGCGIVFIL. Residues 180–186 are Extracellular-facing; that stretch reads YSESTYV. Residues 187–211 form a helical membrane-spanning segment; that stretch reads ILCLISMFFAMLFLLVSLYIHMFLL. Over 212 to 239 the chain is Cytoplasmic; it reads ARTHVKRIAALPGASSARQRTSMQGAVT. A helical transmembrane segment spans residues 240–265; the sequence is VTMLLGVFTVCWAPFFLHLTLMLSCP. At 266–273 the chain is on the extracellular side; sequence QNLYCSRF. Residues 274 to 297 traverse the membrane as a helical segment; sequence MSHFNMYLILIMCNSVMDPLIYAF. Over 298–325 the chain is Cytoplasmic; sequence RSQEMRKTFKEIICCRGFRIACSFPRRD. 2 S-palmitoyl cysteine lipidation sites follow: cysteine 311 and cysteine 312.

This sequence belongs to the G-protein coupled receptor 1 family. Expressed in the brain but not in the melanoma cells.

Its subcellular location is the cell membrane. Functionally, receptor for MSH (alpha, beta and gamma) and ACTH. The activity of this receptor is mediated by G proteins which activate adenylate cyclase. This receptor is a possible mediator of the immunomodulation properties of melanocortins. The sequence is that of Melanocortin receptor 5 (MC5R) from Homo sapiens (Human).